Here is a 570-residue protein sequence, read N- to C-terminus: Conserved oligomeric Golgi complex subunit 8 (570 aa).

This sequence belongs to the COG8 family. Component of the conserved oligomeric Golgi complex which is composed of eight different subunits and is required for normal Golgi morphology and localization.

It localises to the golgi apparatus membrane. In terms of biological role, required for normal Golgi function. The polypeptide is Conserved oligomeric Golgi complex subunit 8 (Drosophila melanogaster (Fruit fly)).